The primary structure comprises 193 residues: NADH-quinone oxidoreductase subunit B (193 aa).

[4Fe-4S] cluster-binding residues include C72, C73, C137, and C167.

The protein belongs to the complex I 20 kDa subunit family. As to quaternary structure, NDH-1 is composed of 14 different subunits. Subunits NuoB, C, D, E, F, and G constitute the peripheral sector of the complex. Requires [4Fe-4S] cluster as cofactor.

The protein resides in the cell inner membrane. The catalysed reaction is a quinone + NADH + 5 H(+)(in) = a quinol + NAD(+) + 4 H(+)(out). Functionally, NDH-1 shuttles electrons from NADH, via FMN and iron-sulfur (Fe-S) centers, to quinones in the respiratory chain. The immediate electron acceptor for the enzyme in this species is believed to be ubiquinone. Couples the redox reaction to proton translocation (for every two electrons transferred, four hydrogen ions are translocated across the cytoplasmic membrane), and thus conserves the redox energy in a proton gradient. The protein is NADH-quinone oxidoreductase subunit B of Phenylobacterium zucineum (strain HLK1).